The following is a 788-amino-acid chain: Cell division cycle protein 27 homolog (788 aa).

Positions 198–436 (YLDSPASSLK…PLPSVASSLN (239 aa)) are disordered. The span at 217-229 (GPSSSSAASTAEP) shows a compositional bias: low complexity. 3 stretches are compositionally biased toward polar residues: residues 241 to 273 (RGTI…SRIN), 293 to 303 (SSVTGSRSSLF), and 319 to 360 (NRAN…NPVR). The segment covering 366–378 (ADAAAAANKTAKT) has biased composition (low complexity). Residues 391–414 (VSRNSNLARSLSGSTNSVASTASE) are compositionally biased toward polar residues. TPR repeat units lie at residues 561–594 (PQSW…DKRF), 596–628 (YAYT…SPRD), 629–662 (YRAW…NPTN), 664–696 (AMLC…NPLD), and 731–764 (AFIF…DPRG).

This sequence belongs to the APC3/CDC27 family. As to quaternary structure, the APC/C complex is probably composed of at least 12 subunits: apc-2, apc-10, apc-11, cdc-26, emb-1, emb-27, emb-30, mat-1, mat-2, mat-3, such-1 and gfi-3. As to expression, expressed in the ventral nerve cord.

The protein localises to the nucleus. It functions in the pathway protein modification; protein ubiquitination. Functionally, probable component of the anaphase promoting complex/cyclosome (APC/C), a cell cycle-regulated E3 ubiquitin ligase that controls progression through mitosis and the G1 phase of the cell cycle. The APC/C complex acts by mediating ubiquitination and subsequent degradation of target proteins. Developmental role in early embryogenesis and the metaphase to anaphase transition in oocyte and spermatocyte meiosis and mitosis in germ cells. Required for embryonic anterior-posterior axis formation. Plays a role in regulating the abundance of glr-1 receptors in postmitotic neurons, which may in turn control animal locomotion. This chain is Cell division cycle protein 27 homolog, found in Caenorhabditis elegans.